The following is a 53-amino-acid chain: Minor histocompatibility protein HMSD variant form (53 aa).

As to quaternary structure, ACC-6 forms a complex with MHC HLA-B*4403. In terms of tissue distribution, highly expressed in dendritic cells and primary leukemia cells, especially those of myeloid lineage. ACC-6 expression is limited to cells of the hematopoietic lineage.

In terms of biological role, this splice variant of HMSD is the precursor of the histocompatibility antigen ACC-6. More generally, minor histocompatibility antigens (mHags) refer to immunogenic peptide which, when complexed with MHC, can generate an immune response after recognition by specific T-cells. The peptides are derived from polymorphic intracellular proteins, which are cleaved by normal pathways of antigen processing. The binding of these peptides to MHC class I or class II molecules and its expression on the cell surface can stimulate T-cell responses and thereby trigger graft rejection or graft-versus-host disease (GVHD) after hematopoietic stem cell transplantation from HLA-identical sibling donor. GVHD is a frequent complication after bone marrow transplantation (BMT), due to mismatch of minor histocompatibility antigen in HLA-matched sibling marrow transplants. However, associated with GVHD, a favorable graft-versus-leukemia (GVL) can be induced by donor-recipient disparities in mHags. ACC-6 is presented to the cell surface by MHC HLA-B*4403. This complex specifically elicits donor-cytotoxic T-lymphocyte (CTL) reactivity against hematologic malignancies after treatment by HLA-identical allogenic BMT. It induces cell recognition and lysis by CTL. Immunogenicity of most autosomal mHags results from single-nucleotide polymorphisms that cause amino-acid substitutions within epitopes, leading to the differential recognition of peptides between donor and recipient. This chain is Minor histocompatibility protein HMSD variant form (HMSD), found in Homo sapiens (Human).